The sequence spans 400 residues: Argininosuccinate synthase (400 aa).

Residue Ala-8–Ser-16 participates in ATP binding. Tyr-87 and Ser-92 together coordinate L-citrulline. Gly-117 is an ATP binding site. Residues Thr-119, Asn-123, and Asp-124 each contribute to the L-aspartate site. Asn-123 is an L-citrulline binding site. L-citrulline is bound by residues Arg-127, Ser-175, Glu-259, and Tyr-271.

This sequence belongs to the argininosuccinate synthase family. Type 1 subfamily. Homotetramer.

It localises to the cytoplasm. It catalyses the reaction L-citrulline + L-aspartate + ATP = 2-(N(omega)-L-arginino)succinate + AMP + diphosphate + H(+). The protein operates within amino-acid biosynthesis; L-arginine biosynthesis; L-arginine from L-ornithine and carbamoyl phosphate: step 2/3. The polypeptide is Argininosuccinate synthase (Frankia casuarinae (strain DSM 45818 / CECT 9043 / HFP020203 / CcI3)).